Consider the following 827-residue polypeptide: Spastin (827 aa).

The segment covering 1–13 has biased composition (polar residues); it reads MVRNKYTLTTAGK. A disordered region spans residues 1–58; the sequence is MVRNKYTLTTAGKSPSKKSRTGSLSKQHDATGDDDGETGTLDGSGSAAGSPVGGGTDA. Topologically, residues 1-79 are cytoplasmic; that stretch reads MVRNKYTLTT…KQNLYIISFP (79 aa). Positions 38–50 are enriched in low complexity; sequence TGTLDGSGSAAGS. The helical intramembrane region spans 80–100; the sequence is VIFVFNVLRSLLYQLFIVFRY. The Cytoplasmic portion of the chain corresponds to 101-827; it reads VYNFTTKVVY…WLQDFGDVTL (727 aa). 2 disordered regions span residues 127–190 and 207–229; these read QHGH…AHPL and SIQRSASGSQVGPGDPLLAKQKH. The segment covering 129–141 has biased composition (basic residues); it reads GHHHHHHHRHSSH. A compositionally biased stretch (low complexity) spans 142–190; it reads SIHSTAAAHQLQQHQQQQQHQYSLLQQEQHGVTEPQQQQQQQHQAAHPL. The 76-residue stretch at 231-306 folds into the MIT domain; the sequence is HRRAFEYISK…SMARDRLQFL (76 aa). Disordered regions lie at residues 358-381, 398-433, and 476-526; these read HHPARGTAASSRPTTAATAPATPS, VGYKRPGNLGVMNKSQTLPRSMGGTRTTPTGTGGAG, and VSIP…PQIS. Residues 364–381 are compositionally biased toward low complexity; it reads TAASSRPTTAATAPATPS. Composition is skewed to low complexity over residues 476–486 and 510–524; these read VSIPIPGSSPV and QQPQQPQQQQQQQPQ. Position 592–599 (592–599) interacts with ATP; sequence GPPGNGKT.

It belongs to the AAA ATPase family. Spastin subfamily. Homohexamer. The homohexamer is stabilized by ATP-binding. The homohexamer may adopt a ring conformation through which microtubules pass prior to being severed. Interacts with microtubules.

Its subcellular location is the membrane. It is found in the cytoplasm. It localises to the cytoskeleton. The protein resides in the microtubule organizing center. The protein localises to the centrosome. It carries out the reaction n ATP + n H2O + a microtubule = n ADP + n phosphate + (n+1) alpha/beta tubulin heterodimers.. Its function is as follows. ATP-dependent microtubule severing protein. Microtubule severing may promote reorganization of cellular microtubule arrays and the release of microtubules from the microtubule organizing center following nucleation. In Anopheles gambiae (African malaria mosquito), this protein is Spastin (spas).